Here is a 71-residue protein sequence, read N- to C-terminus: Beta-defensin 2 (71 aa).

The N-terminal stretch at 1–20 (MRTLCSLLLICCLLFSYTTP) is a signal peptide. 3 disulfides stabilise this stretch: cysteine 37–cysteine 66, cysteine 44–cysteine 59, and cysteine 49–cysteine 67.

It belongs to the beta-defensin family. As to expression, kidney, uterus and to a lesser extent in heart.

The protein localises to the secreted. Has bactericidal activity. This chain is Beta-defensin 2 (Defb2), found in Mus musculus (Mouse).